Reading from the N-terminus, the 113-residue chain is Hydrogenase maturation factor HypA (113 aa).

His-2 contacts Ni(2+). The Zn(2+) site is built by Cys-73, Cys-76, Cys-89, and Cys-92.

This sequence belongs to the HypA/HybF family.

Its function is as follows. Involved in the maturation of [NiFe] hydrogenases. Required for nickel insertion into the metal center of the hydrogenase. This is Hydrogenase maturation factor HypA from Rhizobium leguminosarum bv. viciae.